The primary structure comprises 648 residues: Chaperone protein DnaK (648 aa).

Phosphothreonine; by autocatalysis is present on threonine 200. The disordered stretch occupies residues 612–631 (QAGAAGAAGAAEGAAQGGAQ).

Belongs to the heat shock protein 70 family.

Functionally, acts as a chaperone. This chain is Chaperone protein DnaK, found in Burkholderia multivorans (strain ATCC 17616 / 249).